The chain runs to 144 residues: Large ribosomal subunit protein uL15 (144 aa).

Residues 1-58 (MKLNTLSPAAGAKHAAKRVGRGIGSGLGKTAGRGHKGQKSRSGGSIRPGFEGGQMPLK) form a disordered region. Over residues 21 to 31 (RGIGSGLGKTA) the composition is skewed to gly residues.

This sequence belongs to the universal ribosomal protein uL15 family. In terms of assembly, part of the 50S ribosomal subunit.

Its function is as follows. Binds to the 23S rRNA. This Psychromonas ingrahamii (strain DSM 17664 / CCUG 51855 / 37) protein is Large ribosomal subunit protein uL15.